Here is a 721-residue protein sequence, read N- to C-terminus: MSYNLPNPSLIGILLIISTHSGPQLIYKQPPGLTKEPDEDEGEYDQEDIAETESDEYGNYFEYDEDSNMYGTNLYKQWDANHLNYYMGTKKDLISFLDEIETKRKQASMKAVAKKRSQLSKIASNPSTISTTGNSGNDSIFGIEPAYLCEMLAPPKKMCNSRFEIMIDDKIFLGLPVHKYDNGSWRLKGSSKRINRNKEENTHQHEVDNSKSKLNLNMFHLVFIMNPPVIEYNYRIDEMFHYVISRLSLVLRYEQSKNDFISNQVKMILNLKEQFKEKEELESQLLNKSSLCKMIHDCYLSISQSKIANLSVNNKLRSFQIPIKTEFHSLPESSVPFIPGSHLSSTVGLLGTTGLINVGETTRYGEAMNDENEGISEAADDIVYFALLLLDDAESIIRDIKTESSGTLAKFIRMINPTESLLKLSTRSNSLDTLQVKSFAFHLIYWRRARVIQPLSTRSVYFVSPMAPITTNLYTDIREFKKSFPTLPSLPQFLKLLSPQSKKPSQFATVIPSKDHRDIYFEALSWLIRFGYVTQLQTFIWLKISRKIKIKVEEDLENESSSRKRSNITKKLLMGGTDNSSKDPAAESSTDNRIMDQNDDKEENATKQLSNINAEDQEIENIKERLKSTSLGPLVSLEDDDDTILLDPGRATTLERRWINKIIFDECKLSSELTNAFYKLLKYMDGKSPLELLLLKENISRTEIRKLLIAIEDHIISVRHW.

The N-terminal stretch at 1–21 (MSYNLPNPSLIGILLIISTHS) is a signal peptide. Disordered regions lie at residues 27-54 (YKQPPGLTKEPDEDEGEYDQEDIAETES) and 555-614 (DLEN…NINA). The segment covering 37–54 (PDEDEGEYDQEDIAETES) has biased composition (acidic residues).

It belongs to the NPR3 family.

In terms of biological role, mediates inactivation of the TORC1 complex in response to amino acid starvation. Required for meiotic nuclear division. The sequence is that of Nitrogen permease regulator 3 (NPR3) from Scheffersomyces stipitis (strain ATCC 58785 / CBS 6054 / NBRC 10063 / NRRL Y-11545) (Yeast).